The primary structure comprises 550 residues: Glucose-6-phosphate isomerase (550 aa).

D-glucose 6-phosphate is bound by residues glycine 164 to serine 165, serine 215 to threonine 220, glutamine 359, glutamate 363, and histidine 394. The active-site Proton donor is the glutamate 363. Residue histidine 394 is part of the active site. Threonine 455 carries the post-translational modification Phosphothreonine. Lysine 516 is a binding site for D-glucose 6-phosphate. Lysine 516 is an active-site residue.

It belongs to the GPI family. In terms of assembly, homodimer.

The protein localises to the cytoplasm. The protein resides in the cytosol. It catalyses the reaction alpha-D-glucose 6-phosphate = beta-D-fructose 6-phosphate. It functions in the pathway carbohydrate degradation; glycolysis; D-glyceraldehyde 3-phosphate and glycerone phosphate from D-glucose: step 2/4. Its function is as follows. In the cytoplasm, catalyzes the conversion of glucose-6-phosphate to fructose-6-phosphate, the second step in glycolysis, and the reverse reaction during gluconeogenesis. This is Glucose-6-phosphate isomerase (pgi1) from Schizosaccharomyces pombe (strain 972 / ATCC 24843) (Fission yeast).